The sequence spans 278 residues: Probable endonuclease 4 (278 aa).

His-69, His-109, Glu-145, Asp-179, His-182, His-214, Asp-227, His-229, and Glu-259 together coordinate Zn(2+).

The protein belongs to the AP endonuclease 2 family. Zn(2+) serves as cofactor.

The enzyme catalyses Endonucleolytic cleavage to 5'-phosphooligonucleotide end-products.. Endonuclease IV plays a role in DNA repair. It cleaves phosphodiester bonds at apurinic or apyrimidinic (AP) sites, generating a 3'-hydroxyl group and a 5'-terminal sugar phosphate. The chain is Probable endonuclease 4 from Phocaeicola vulgatus (strain ATCC 8482 / DSM 1447 / JCM 5826 / CCUG 4940 / NBRC 14291 / NCTC 11154) (Bacteroides vulgatus).